We begin with the raw amino-acid sequence, 471 residues long: Citrate synthase, mitochondrial (471 aa).

A mitochondrion-targeting transit peptide spans 1–18; that stretch reads MASLRSATALSRLRSRAG. Residues His307, His353, and Asp408 contribute to the active site.

The protein belongs to the citrate synthase family. As to quaternary structure, homodimer.

It is found in the mitochondrion matrix. It carries out the reaction oxaloacetate + acetyl-CoA + H2O = citrate + CoA + H(+). Its pathway is carbohydrate metabolism; tricarboxylic acid cycle; isocitrate from oxaloacetate: step 1/2. The polypeptide is Citrate synthase, mitochondrial (CIT) (Citrus maxima (Pomelo)).